The chain runs to 496 residues: L-arabinose isomerase (496 aa).

4 residues coordinate Mn(2+): Glu-305, Glu-330, His-347, and His-446.

The protein belongs to the arabinose isomerase family. The cofactor is Mn(2+).

It carries out the reaction beta-L-arabinopyranose = L-ribulose. Its pathway is carbohydrate degradation; L-arabinose degradation via L-ribulose; D-xylulose 5-phosphate from L-arabinose (bacterial route): step 1/3. Functionally, catalyzes the conversion of L-arabinose to L-ribulose. The protein is L-arabinose isomerase of Bacillus subtilis (strain 168).